A 1308-amino-acid chain; its full sequence is Contactin-associated protein-like 4 (1308 aa).

Positions 1-25 are cleaved as a signal peptide; that stretch reads MGSVTGAVLKTLLLLSTQNWNRVEA. Over 26–1241 the chain is Extracellular; the sequence is GNSYDCDDPL…LANAIKSDSA (1216 aa). Positions 31-177 constitute an F5/8 type C domain; sequence CDDPLVSALP…IGMRIEVFGC (147 aa). C31 and C177 are joined by a disulfide. Laminin G-like domains are found at residues 212 to 364 and 398 to 547; these read FKTM…SFSC and FRTW…IDSC. Residues N260, N285, N359, and N538 are each glycosylated (N-linked (GlcNAc...) asparagine). Cystine bridges form between C332–C364, C515–C547, C553–C564, and C558–C573. An EGF-like 1 domain is found at 549–586; that stretch reads ISDRCLPNYCEHGGECSQSWSTFHCNCTNTGYRGATCH. N574 carries N-linked (GlcNAc...) asparagine glycosylation. C575 and C585 form a disulfide bridge. One can recognise a Fibrinogen C-terminal domain in the interval 587–792; the sequence is NSIYEQSCEA…LLCQGDRSFW (206 aa). Residues N602, N625, N637, N706, and N748 are each glycosylated (N-linked (GlcNAc...) asparagine). In terms of domain architecture, Laminin G-like 3 spans 793–957; that stretch reads NSASFDTEAS…AQVTPEVQPG (165 aa). Cystine bridges form between C931-C958, C962-C975, C969-C984, and C986-C996. The EGF-like 2 domain occupies 958 to 997; the sequence is CRGHCSSYGKLCRNGGKCRERPIGFFCDCTFSAYTGPFCS. 2 N-linked (GlcNAc...) asparagine glycosylation sites follow: N1023 and N1073. The Laminin G-like 4 domain occupies 1046–1202; that stretch reads FRTTRTPSLL…VTGHVTESSC (157 aa). C1167 and C1202 are disulfide-bonded. Residues 1242-1262 traverse the membrane as a helical segment; it reads VIGGLIAVVIFILLCITAIAV. Topologically, residues 1263-1308 are cytoplasmic; that stretch reads RIYQQKRLYKRSEAKRSENVDSAEAVLKSELNIQNAVNENQKEYFF.

It belongs to the neurexin family. In terms of assembly, interacts with TIAM1.

Its subcellular location is the presynaptic cell membrane. Presynaptic protein involved in both dopaminergic synaptic transmission and GABAergic system, thereby participating in the structural maturation of inhibitory interneuron synapses. Involved in the dopaminergic synaptic transmission by attenuating dopamine release through a presynaptic mechanism. Also participates in the GABAergic system. The chain is Contactin-associated protein-like 4 (CNTNAP4) from Homo sapiens (Human).